Here is a 331-residue protein sequence, read N- to C-terminus: CRISPR-associated endonuclease Cas1 (331 aa).

The Mn(2+) site is built by E155, H221, and E236.

It belongs to the CRISPR-associated endonuclease Cas1 family. In terms of assembly, homodimer, forms a heterotetramer with a Cas2 homodimer. Requires Mg(2+) as cofactor. Mn(2+) serves as cofactor.

Its function is as follows. CRISPR (clustered regularly interspaced short palindromic repeat), is an adaptive immune system that provides protection against mobile genetic elements (viruses, transposable elements and conjugative plasmids). CRISPR clusters contain spacers, sequences complementary to antecedent mobile elements, and target invading nucleic acids. CRISPR clusters are transcribed and processed into CRISPR RNA (crRNA). Acts as a dsDNA endonuclease. Involved in the integration of spacer DNA into the CRISPR cassette. The polypeptide is CRISPR-associated endonuclease Cas1 (Methanopyrus kandleri (strain AV19 / DSM 6324 / JCM 9639 / NBRC 100938)).